A 213-amino-acid polypeptide reads, in one-letter code: Putative 3-methyladenine DNA glycosylase (213 aa).

It belongs to the DNA glycosylase MPG family.

This is Putative 3-methyladenine DNA glycosylase from Paraburkholderia phytofirmans (strain DSM 17436 / LMG 22146 / PsJN) (Burkholderia phytofirmans).